Here is a 154-residue protein sequence, read N- to C-terminus: 3-dehydroquinate dehydratase (154 aa).

Tyr-26 acts as the Proton acceptor in catalysis. Substrate is bound by residues Asn-77, His-83, and Asp-90. His-103 functions as the Proton donor in the catalytic mechanism. Substrate contacts are provided by residues 104 to 105 and Arg-114; that span reads IS.

This sequence belongs to the type-II 3-dehydroquinase family. In terms of assembly, homododecamer.

The catalysed reaction is 3-dehydroquinate = 3-dehydroshikimate + H2O. Its pathway is metabolic intermediate biosynthesis; chorismate biosynthesis; chorismate from D-erythrose 4-phosphate and phosphoenolpyruvate: step 3/7. Functionally, catalyzes a trans-dehydration via an enolate intermediate. This Buchnera aphidicola subsp. Baizongia pistaciae (strain Bp) protein is 3-dehydroquinate dehydratase.